Here is a 462-residue protein sequence, read N- to C-terminus: F-box/LRR-repeat protein At5g38396 (462 aa).

The region spanning 1-47 (MDLLRNIPDELICHILSFLTTKEAALTSVLSKRWRNLLAFVSNLHID) is the F-box domain. LRR repeat units lie at residues 118–146 (SIDL…KLHR), 148–175 (CIGQ…ELDY), 197–222 (VDAF…TMSS), 302–333 (CLDL…SIKS), and 334–359 (AENR…VLEG).

This chain is F-box/LRR-repeat protein At5g38396, found in Arabidopsis thaliana (Mouse-ear cress).